Here is a 389-residue protein sequence, read N- to C-terminus: Stilbene synthase 3 (389 aa).

55–58 (KFQR) is a binding site for substrate. Cysteine 164 is a catalytic residue. Substrate is bound by residues leucine 267 and 305-307 (GGR).

This sequence belongs to the thiolase-like superfamily. Chalcone/stilbene synthases family. Homodimer.

It is found in the cytoplasm. The catalysed reaction is 4-coumaroyl-CoA + 3 malonyl-CoA + 3 H(+) = trans-resveratrol + 4 CO2 + 4 CoA. It functions in the pathway phytoalexin biosynthesis; 3,4',5-trihydroxystilbene biosynthesis; 3,4',5-trihydroxystilbene from trans-4-coumarate: step 2/2. This is Stilbene synthase 3 from Arachis hypogaea (Peanut).